The sequence spans 88 residues: UPF0250 protein Shewmr4_0986 (88 aa).

The protein belongs to the UPF0250 family.

In Shewanella sp. (strain MR-4), this protein is UPF0250 protein Shewmr4_0986.